We begin with the raw amino-acid sequence, 405 residues long: Probable tRNA sulfurtransferase (405 aa).

Positions 60–165 constitute a THUMP domain; the sequence is VPVAESLKQI…EEAAYLSYEN (106 aa). ATP contacts are provided by residues 183 to 184, 208 to 209, arginine 265, glycine 287, and glutamine 296; these read ML and HF.

This sequence belongs to the ThiI family.

It localises to the cytoplasm. It catalyses the reaction [ThiI sulfur-carrier protein]-S-sulfanyl-L-cysteine + a uridine in tRNA + 2 reduced [2Fe-2S]-[ferredoxin] + ATP + H(+) = [ThiI sulfur-carrier protein]-L-cysteine + a 4-thiouridine in tRNA + 2 oxidized [2Fe-2S]-[ferredoxin] + AMP + diphosphate. It carries out the reaction [ThiS sulfur-carrier protein]-C-terminal Gly-Gly-AMP + S-sulfanyl-L-cysteinyl-[cysteine desulfurase] + AH2 = [ThiS sulfur-carrier protein]-C-terminal-Gly-aminoethanethioate + L-cysteinyl-[cysteine desulfurase] + A + AMP + 2 H(+). Its pathway is cofactor biosynthesis; thiamine diphosphate biosynthesis. In terms of biological role, catalyzes the ATP-dependent transfer of a sulfur to tRNA to produce 4-thiouridine in position 8 of tRNAs, which functions as a near-UV photosensor. Also catalyzes the transfer of sulfur to the sulfur carrier protein ThiS, forming ThiS-thiocarboxylate. This is a step in the synthesis of thiazole, in the thiamine biosynthesis pathway. The sulfur is donated as persulfide by IscS. The protein is Probable tRNA sulfurtransferase of Streptococcus mutans serotype c (strain ATCC 700610 / UA159).